Reading from the N-terminus, the 444-residue chain is KARVGFKAGVKDYRLTYYTPEYENKDTDILAAFRVTPQPGVPAEEAAAAVAAESSTGTWTTVWTDGLTSLDRYKGRCYHIEAVVGEENQYIAYVAYPLDLFEEGSVTNMFTSIVGNVFGFXXXRALRLEDLRIPPAYSKTFQGPPHGIQVERDKLNKYGRPLLGCTIKPKLGLSAKNYGRAVYECLRGGLDFTKDDENVNSQPFMRWRDRFLFCAEALYKAQAETGEIKGHYLNATAGTCEEMIKRAVFARELGVPIVMHDYLTGGFTANTTLAHYCRDNGLLLHIHRAMHAVIDRQKNHGMHFRVLAKALRMSGGDHIHSGTVVGKLEGEREMTLGFVDLLRDDYIEKDRSRGIFFTQDWVSMPGVLPVASGGIHVWHMPALTEIFGDDSVLQFGGGTLGHPWGNAPGAVANRVALEACVQARNEGRDLASEGNEIIREACSW.

Lysine 7 carries the post-translational modification N6,N6,N6-trimethyllysine. Substrate contacts are provided by asparagine 116 and threonine 166. Catalysis depends on lysine 168, which acts as the Proton acceptor. Lysine 170 contacts substrate. Residues lysine 194, aspartate 196, and glutamate 197 each contribute to the Mg(2+) site. Lysine 194 carries the N6-carboxylysine modification. Histidine 287 (proton acceptor) is an active-site residue. The substrate site is built by arginine 288, histidine 320, and serine 372.

This sequence belongs to the RuBisCO large chain family. Type I subfamily. Heterohexadecamer of 8 large chains and 8 small chains; disulfide-linked. The disulfide link is formed within the large subunit homodimers. Requires Mg(2+) as cofactor. In terms of processing, the disulfide bond which can form in the large chain dimeric partners within the hexadecamer appears to be associated with oxidative stress and protein turnover.

The protein resides in the plastid. It is found in the chloroplast. It catalyses the reaction 2 (2R)-3-phosphoglycerate + 2 H(+) = D-ribulose 1,5-bisphosphate + CO2 + H2O. It carries out the reaction D-ribulose 1,5-bisphosphate + O2 = 2-phosphoglycolate + (2R)-3-phosphoglycerate + 2 H(+). Its function is as follows. RuBisCO catalyzes two reactions: the carboxylation of D-ribulose 1,5-bisphosphate, the primary event in carbon dioxide fixation, as well as the oxidative fragmentation of the pentose substrate in the photorespiration process. Both reactions occur simultaneously and in competition at the same active site. The chain is Ribulose bisphosphate carboxylase large chain from Watsonia angusta.